Reading from the N-terminus, the 981-residue chain is Bifunctional glutamine synthetase adenylyltransferase/adenylyl-removing enzyme (981 aa).

The adenylyl removase stretch occupies residues 1–473; the sequence is MTMPLPSIEQ…RSVFNNLIGF (473 aa). Residues 479 to 981 are adenylyl transferase; that stretch reads ADDSDNAWSD…HQIWQKLFFE (503 aa).

This sequence belongs to the GlnE family. It depends on Mg(2+) as a cofactor.

It catalyses the reaction [glutamine synthetase]-O(4)-(5'-adenylyl)-L-tyrosine + phosphate = [glutamine synthetase]-L-tyrosine + ADP. The enzyme catalyses [glutamine synthetase]-L-tyrosine + ATP = [glutamine synthetase]-O(4)-(5'-adenylyl)-L-tyrosine + diphosphate. Its function is as follows. Involved in the regulation of glutamine synthetase GlnA, a key enzyme in the process to assimilate ammonia. When cellular nitrogen levels are high, the C-terminal adenylyl transferase (AT) inactivates GlnA by covalent transfer of an adenylyl group from ATP to specific tyrosine residue of GlnA, thus reducing its activity. Conversely, when nitrogen levels are low, the N-terminal adenylyl removase (AR) activates GlnA by removing the adenylyl group by phosphorolysis, increasing its activity. The regulatory region of GlnE binds the signal transduction protein PII (GlnB) which indicates the nitrogen status of the cell. This Mannheimia succiniciproducens (strain KCTC 0769BP / MBEL55E) protein is Bifunctional glutamine synthetase adenylyltransferase/adenylyl-removing enzyme.